A 162-amino-acid chain; its full sequence is Phycoerythrocyanin alpha chain (162 aa).

A (15Z)-phycoviolobilin-binding site is contributed by Cys-84.

Belongs to the phycobiliprotein family. As to quaternary structure, heterodimer of an alpha and a beta chain. Post-translationally, contains one covalently linked bilin chromophore.

It is found in the cellular thylakoid membrane. In terms of biological role, light-harvesting photosynthetic bile pigment-protein from the phycobiliprotein complex. The polypeptide is Phycoerythrocyanin alpha chain (pecA) (Nostoc sp. (strain PCC 7120 / SAG 25.82 / UTEX 2576)).